The chain runs to 258 residues: Dehydrodolichyl diphosphate synthase complex subunit nus1 (258 aa).

The helical transmembrane segment at 5 to 21 threads the bilayer; it reads IFFYLALWVIQSVYGAW.

This sequence belongs to the UPP synthase family. Forms an active dehydrodolichyl diphosphate synthase complex with SPAC4D7.04c. It depends on Mg(2+) as a cofactor.

It is found in the endoplasmic reticulum membrane. The catalysed reaction is n isopentenyl diphosphate + (2E,6E)-farnesyl diphosphate = a di-trans,poly-cis-polyprenyl diphosphate + n diphosphate. The protein operates within protein modification; protein glycosylation. Its function is as follows. With SPAC4D7.04c, forms the dehydrodolichyl diphosphate synthase (DDS) complex, an essential component of the dolichol monophosphate (Dol-P) biosynthetic machinery. Adds multiple copies of isopentenyl pyrophosphate (IPP) to farnesyl pyrophosphate (FPP) to produce dehydrodolichyl diphosphate (Dedol-PP), a precursor of dolichol which is utilized as a sugar carrier in protein glycosylation in the endoplasmic reticulum (ER). The protein is Dehydrodolichyl diphosphate synthase complex subunit nus1 (nus1) of Schizosaccharomyces pombe (strain 972 / ATCC 24843) (Fission yeast).